A 120-amino-acid chain; its full sequence is Large ribosomal subunit protein eL8 (120 aa).

Belongs to the eukaryotic ribosomal protein eL8 family. Part of the 50S ribosomal subunit. Probably part of the RNase P complex.

It localises to the cytoplasm. Multifunctional RNA-binding protein that recognizes the K-turn motif in ribosomal RNA, the RNA component of RNase P, box H/ACA, box C/D and box C'/D' sRNAs. The chain is Large ribosomal subunit protein eL8 from Methanosarcina acetivorans (strain ATCC 35395 / DSM 2834 / JCM 12185 / C2A).